Reading from the N-terminus, the 276-residue chain is Large ribosomal subunit protein uL2 (276 aa).

Positions 221-276 are disordered; that stretch reads RGSAMNPNDHPHGGGEGRAPIGRKSPMTPWGKKARGVKTRDRKKASNALIIRRRKK. The span at 252–276 shows a compositional bias: basic residues; that stretch reads KKARGVKTRDRKKASNALIIRRRKK.

It belongs to the universal ribosomal protein uL2 family. As to quaternary structure, part of the 50S ribosomal subunit. Forms a bridge to the 30S subunit in the 70S ribosome.

Its function is as follows. One of the primary rRNA binding proteins. Required for association of the 30S and 50S subunits to form the 70S ribosome, for tRNA binding and peptide bond formation. It has been suggested to have peptidyltransferase activity; this is somewhat controversial. Makes several contacts with the 16S rRNA in the 70S ribosome. The chain is Large ribosomal subunit protein uL2 from Aster yellows witches'-broom phytoplasma (strain AYWB).